Consider the following 427-residue polypeptide: Glutamate-1-semialdehyde 2,1-aminomutase (427 aa).

The residue at position 265 (Lys265) is an N6-(pyridoxal phosphate)lysine.

This sequence belongs to the class-III pyridoxal-phosphate-dependent aminotransferase family. HemL subfamily. In terms of assembly, homodimer. It depends on pyridoxal 5'-phosphate as a cofactor.

It is found in the cytoplasm. The catalysed reaction is (S)-4-amino-5-oxopentanoate = 5-aminolevulinate. It participates in porphyrin-containing compound metabolism; protoporphyrin-IX biosynthesis; 5-aminolevulinate from L-glutamyl-tRNA(Glu): step 2/2. In Neisseria meningitidis serogroup C (strain 053442), this protein is Glutamate-1-semialdehyde 2,1-aminomutase.